A 184-amino-acid polypeptide reads, in one-letter code: Probable archaeosortase E (184 aa).

A run of 4 helical transmembrane segments spans residues 27 to 47 (ILFLIKFYIIFLVVFFILSYF), 86 to 106 (VVEECTGSFLIAGLLALIIVY), 114 to 134 (IIGIFFVLLAFFVNIFRIVLI), and 151 to 171 (IAGYGVILTLVPVLVIGYLKI). The Acyl-thioester intermediate role is filled by Cys90. Arg130 acts as the Proton donor in catalysis.

Belongs to the exosortase/archaeosortase family. Archaeosortase E subfamily.

Its subcellular location is the cell membrane. Its function is as follows. Transpeptidase that recognizes and modifies its substrate by proteolytic cleavage of a sorting signal. Following cleavage, a covalent intermediate is formed via a thioester bond between the archaeosortase and its substrate, which is then transferred and covalently attached to the cell membrane. This Methanocaldococcus jannaschii (strain ATCC 43067 / DSM 2661 / JAL-1 / JCM 10045 / NBRC 100440) (Methanococcus jannaschii) protein is Probable archaeosortase E.